Reading from the N-terminus, the 345-residue chain is NADPH-dependent oxidoreductase 2-alkenal reductase (345 aa).

NADP(+) is bound by residues 52 to 53 (PY), 163 to 169 (AASGAVG), glycine 188, lysine 192, tyrosine 208, asparagine 232, cysteine 254, tyrosine 260, 284 to 286 (FVV), phenylalanine 330, and 334 to 336 (NVG). Tyrosine 53 provides a ligand contact to substrate. Tyrosine 260 serves as a coordination point for substrate.

Belongs to the NADP-dependent oxidoreductase L4BD family. In terms of assembly, homodimer. In terms of tissue distribution, expressed in leaves.

The protein resides in the cytoplasm. It is found in the nucleus. Its subcellular location is the nucleoplasm. It catalyses the reaction an n-alkanal + NAD(+) = an alk-2-enal + NADH + H(+). The catalysed reaction is an n-alkanal + NADP(+) = an alk-2-enal + NADPH + H(+). Inhibited by N-ethylmaleimide and p-chloromercuribenzoic acid. In terms of biological role, involved in the detoxification of reactive carbonyls. Acts on lipid peroxide-derived reactive aldehydes. Specific to a double bond activated by an adjacent carbonyl group. Can use both quinones and diamide as substrates, but not menadione, ferricyanide or phylloquinone. Can use 4-hydroxy-(2E)-nonenal (HNE), 4-hydroxy-(2E)-hexenal (HHE), (2E)-nonenal, (2E)-hexenal, (2E)-pentenal, propenal (acrolein), 3-buten-2-one and 3-penten-2-one, but not (R)-(-)-carvone, n-nonanal, n-hexanal, (3Z)-hexanal, cyclohex-2-en-1-one or 12-oxo phytodienoic acid (OPDA) as electron acceptors. Catalyzes the reduction of the alpha,beta-unsaturated bond of 2-alkenals, of lipid peroxide-derived oxenes 9-oxo-10(E),12(Z)-octadecadienoic acid (9-KODE) and 13-oxo-9(Z),11(E)-octadecadienoic acid (13-KODE), as well as 4-oxo-(2E)-nonenal and 4-hydroxynonenal. Can use 12-oxo-10(E) dodecanoate (traumatin), trans-1,3 diphenyl-2-propenone, trans-1,4-diphenyl-2-butene-1,4-dione, 9-oxo-12,13-epoxy-(10E)-octadecenoic acid (trans-EKODE-1b) and 9,13-dihydroxy-10-oxo-11-octadecenoic acid as substrates. Catalyzes the reduction of the 7-8 double bond of phenylpropanal substrates, such as p-coumaryl aldehyde and coniferyl aldehyde (in vitro). Has activity towards toxic substrates, such as 4-hydroxy-(2E)-nonenal (in vitro). May play a distinct role in plant antioxidant defense and is possibly involved in NAD(P)/NAD(P)H homeostasis. This is NADPH-dependent oxidoreductase 2-alkenal reductase from Arabidopsis thaliana (Mouse-ear cress).